A 77-amino-acid polypeptide reads, in one-letter code: Acyl carrier protein (77 aa).

In terms of domain architecture, Carrier spans 2–77; sequence AEVFDRVKEI…DAVDYINSKA (76 aa). S37 carries the O-(pantetheine 4'-phosphoryl)serine modification.

Belongs to the acyl carrier protein (ACP) family. In terms of processing, 4'-phosphopantetheine is transferred from CoA to a specific serine of apo-ACP by AcpS. This modification is essential for activity because fatty acids are bound in thioester linkage to the sulfhydryl of the prosthetic group.

The protein resides in the cytoplasm. The protein operates within lipid metabolism; fatty acid biosynthesis. Carrier of the growing fatty acid chain in fatty acid biosynthesis. The polypeptide is Acyl carrier protein (Oceanobacillus iheyensis (strain DSM 14371 / CIP 107618 / JCM 11309 / KCTC 3954 / HTE831)).